We begin with the raw amino-acid sequence, 518 residues long: Glutamate--cysteine ligase (518 aa).

This sequence belongs to the glutamate--cysteine ligase type 1 family. Type 1 subfamily.

It catalyses the reaction L-cysteine + L-glutamate + ATP = gamma-L-glutamyl-L-cysteine + ADP + phosphate + H(+). It participates in sulfur metabolism; glutathione biosynthesis; glutathione from L-cysteine and L-glutamate: step 1/2. This chain is Glutamate--cysteine ligase, found in Salmonella arizonae (strain ATCC BAA-731 / CDC346-86 / RSK2980).